The primary structure comprises 106 residues: Aspartyl/glutamyl-tRNA(Asn/Gln) amidotransferase subunit C (106 aa).

It belongs to the GatC family. As to quaternary structure, heterotrimer of A, B and C subunits.

It carries out the reaction L-glutamyl-tRNA(Gln) + L-glutamine + ATP + H2O = L-glutaminyl-tRNA(Gln) + L-glutamate + ADP + phosphate + H(+). The catalysed reaction is L-aspartyl-tRNA(Asn) + L-glutamine + ATP + H2O = L-asparaginyl-tRNA(Asn) + L-glutamate + ADP + phosphate + 2 H(+). Its function is as follows. Allows the formation of correctly charged Asn-tRNA(Asn) or Gln-tRNA(Gln) through the transamidation of misacylated Asp-tRNA(Asn) or Glu-tRNA(Gln) in organisms which lack either or both of asparaginyl-tRNA or glutaminyl-tRNA synthetases. The reaction takes place in the presence of glutamine and ATP through an activated phospho-Asp-tRNA(Asn) or phospho-Glu-tRNA(Gln). The sequence is that of Aspartyl/glutamyl-tRNA(Asn/Gln) amidotransferase subunit C from Lactiplantibacillus plantarum (strain ATCC BAA-793 / NCIMB 8826 / WCFS1) (Lactobacillus plantarum).